We begin with the raw amino-acid sequence, 399 residues long: Telomeric repeat-binding factor 2-interacting protein 1 (399 aa).

The residue at position 2 (Ala-2) is an N-acetylalanine. A phosphoserine mark is found at Ser-36 and Ser-43. The 24-residue stretch at 78 to 101 (FISTQYILDCVERNERLELEAYRL) folds into the BRCT domain. Residues 104–132 (ASAADTGSEAKPGALAEGAAEPEPQRHAG) are disordered. Low complexity predominate over residues 112 to 125 (EAKPGALAEGAAEP). Lys-114 participates in a covalent cross-link: Glycyl lysine isopeptide (Lys-Gly) (interchain with G-Cter in SUMO2). The Myb-like domain occupies 128–188 (QRHAGRIAFT…SLKDRYLKHL (61 aa)). Phosphoserine occurs at positions 154 and 156. Lys-194 is covalently cross-linked (Glycyl lysine isopeptide (Lys-Gly) (interchain with G-Cter in SUMO2)). Disordered stretches follow at residues 196-244 (LLGD…EEIQ) and 264-311 (VVVD…QPEV). Phosphoserine is present on residues Ser-203 and Ser-206. Residues Lys-208, Lys-212, and Lys-240 each participate in a glycyl lysine isopeptide (Lys-Gly) (interchain with G-Cter in SUMO2) cross-link. Acidic residues predominate over residues 280-304 (CDDDPPTPEEDSETQPDEEEEEEEE). Lys-372 participates in a covalent cross-link: Glycyl lysine isopeptide (Lys-Gly) (interchain with G-Cter in SUMO2). The Nuclear localization signal signature appears at 383–399 (KKFGAQNVARRIEFRKK).

Belongs to the RAP1 family. As to quaternary structure, associates with the I-kappa-B-kinase (IKK) core complex, composed of CHUK, IKBKB and IKBKG. Homodimer. Component of the shelterin complex (telosome) composed of TERF1, TERF2, TINF2, TERF2IP ACD and POT1. Interacts with TERF2; the interaction is direct. Does not interact with TERF1. Interacts with SLX4/BTBD12. Ubiquitous. Highly expressed.

The protein localises to the nucleus. It localises to the cytoplasm. Its subcellular location is the chromosome. It is found in the telomere. Its function is as follows. Acts both as a regulator of telomere function and as a transcription regulator. Involved in the regulation of telomere length and protection as a component of the shelterin complex (telosome). In contrast to other components of the shelterin complex, it is dispensible for telomere capping and does not participate in the protection of telomeres against non-homologous end-joining (NHEJ)-mediated repair. Instead, it is required to negatively regulate telomere recombination and is essential for repressing homology-directed repair (HDR), which can affect telomere length. Does not bind DNA directly: recruited to telomeric double-stranded 5'-TTAGGG-3' repeats via its interaction with TERF2. Independently of its function in telomeres, also acts as a transcription regulator: recruited to extratelomeric 5'-TTAGGG-3' sites via its association with TERF2 or other factors, and regulates gene expression. When cytoplasmic, associates with the I-kappa-B-kinase (IKK) complex and acts as a regulator of the NF-kappa-B signaling by promoting IKK-mediated phosphorylation of RELA/p65, leading to activate expression of NF-kappa-B target genes. The chain is Telomeric repeat-binding factor 2-interacting protein 1 (TERF2IP) from Homo sapiens (Human).